The sequence spans 307 residues: Coproporphyrin III ferrochelatase (307 aa).

Residues Y12, R29, 45-46 (RY), S53, and Y124 each bind Fe-coproporphyrin III. The Fe(2+) site is built by H181 and E263.

Belongs to the ferrochelatase family.

It localises to the cytoplasm. The catalysed reaction is Fe-coproporphyrin III + 2 H(+) = coproporphyrin III + Fe(2+). The protein operates within porphyrin-containing compound metabolism; protoheme biosynthesis. Its function is as follows. Involved in coproporphyrin-dependent heme b biosynthesis. Catalyzes the insertion of ferrous iron into coproporphyrin III to form Fe-coproporphyrin III. The polypeptide is Coproporphyrin III ferrochelatase (Staphylococcus saprophyticus subsp. saprophyticus (strain ATCC 15305 / DSM 20229 / NCIMB 8711 / NCTC 7292 / S-41)).